The chain runs to 47 residues: uncharacterized protein (47 aa).

The 46-residue stretch at 2 to 47 folds into the ATP-cone domain; the sequence is LRVRKRDGRLEEFSRAKIVRTCLRAGASKKIAEKVAEELKRGYTMG.

This is an uncharacterized protein from Archaeoglobus fulgidus (strain ATCC 49558 / DSM 4304 / JCM 9628 / NBRC 100126 / VC-16).